We begin with the raw amino-acid sequence, 871 residues long: DNA mismatch repair protein MutS 1 (871 aa).

614–621 (GPNMSGKS) is a binding site for ATP.

This sequence belongs to the DNA mismatch repair MutS family.

This protein is involved in the repair of mismatches in DNA. It is possible that it carries out the mismatch recognition step. This protein has a weak ATPase activity. In Halobacterium salinarum (strain ATCC 29341 / DSM 671 / R1), this protein is DNA mismatch repair protein MutS 1.